Consider the following 437-residue polypeptide: UDP-glucose 6-dehydrogenase (437 aa).

Residues V11, D30, K35, T86, T122, and E155 each contribute to the NAD(+) site. Residues 151–155, K209, N213, 254–258, and G262 contribute to the substrate site; these read EFLRE and FLHAG. The Nucleophile role is filled by C265. K268 lines the NAD(+) pocket. Substrate is bound at residue K326. Residue R333 coordinates NAD(+).

It belongs to the UDP-glucose/GDP-mannose dehydrogenase family.

It catalyses the reaction UDP-alpha-D-glucose + 2 NAD(+) + H2O = UDP-alpha-D-glucuronate + 2 NADH + 3 H(+). The protein operates within nucleotide-sugar biosynthesis; UDP-alpha-D-glucuronate biosynthesis; UDP-alpha-D-glucuronate from UDP-alpha-D-glucose: step 1/1. It functions in the pathway capsule biogenesis; capsule polysaccharide biosynthesis. This is UDP-glucose 6-dehydrogenase from Rhizobium meliloti (strain 1021) (Ensifer meliloti).